A 283-amino-acid polypeptide reads, in one-letter code: 4-hydroxy-3-methylbut-2-enyl diphosphate reductase (283 aa).

Cys-12 provides a ligand contact to [4Fe-4S] cluster. (2E)-4-hydroxy-3-methylbut-2-enyl diphosphate-binding residues include His-40 and His-72. 2 residues coordinate dimethylallyl diphosphate: His-40 and His-72. Isopentenyl diphosphate is bound by residues His-40 and His-72. Cys-94 serves as a coordination point for [4Fe-4S] cluster. Residue His-122 coordinates (2E)-4-hydroxy-3-methylbut-2-enyl diphosphate. Residue His-122 coordinates dimethylallyl diphosphate. Position 122 (His-122) interacts with isopentenyl diphosphate. Residue Glu-124 is the Proton donor of the active site. Thr-160 contacts (2E)-4-hydroxy-3-methylbut-2-enyl diphosphate. Residue Cys-188 coordinates [4Fe-4S] cluster. The (2E)-4-hydroxy-3-methylbut-2-enyl diphosphate site is built by Ser-216, Asn-218, and Ser-259. 3 residues coordinate dimethylallyl diphosphate: Ser-216, Asn-218, and Ser-259. Residues Ser-216, Asn-218, and Ser-259 each coordinate isopentenyl diphosphate.

Belongs to the IspH family. Requires [4Fe-4S] cluster as cofactor.

It catalyses the reaction isopentenyl diphosphate + 2 oxidized [2Fe-2S]-[ferredoxin] + H2O = (2E)-4-hydroxy-3-methylbut-2-enyl diphosphate + 2 reduced [2Fe-2S]-[ferredoxin] + 2 H(+). The enzyme catalyses dimethylallyl diphosphate + 2 oxidized [2Fe-2S]-[ferredoxin] + H2O = (2E)-4-hydroxy-3-methylbut-2-enyl diphosphate + 2 reduced [2Fe-2S]-[ferredoxin] + 2 H(+). The protein operates within isoprenoid biosynthesis; dimethylallyl diphosphate biosynthesis; dimethylallyl diphosphate from (2E)-4-hydroxy-3-methylbutenyl diphosphate: step 1/1. It functions in the pathway isoprenoid biosynthesis; isopentenyl diphosphate biosynthesis via DXP pathway; isopentenyl diphosphate from 1-deoxy-D-xylulose 5-phosphate: step 6/6. Its function is as follows. Catalyzes the conversion of 1-hydroxy-2-methyl-2-(E)-butenyl 4-diphosphate (HMBPP) into a mixture of isopentenyl diphosphate (IPP) and dimethylallyl diphosphate (DMAPP). Acts in the terminal step of the DOXP/MEP pathway for isoprenoid precursor biosynthesis. The protein is 4-hydroxy-3-methylbut-2-enyl diphosphate reductase of Dictyoglomus turgidum (strain DSM 6724 / Z-1310).